A 494-amino-acid chain; its full sequence is 2,3-bisphosphoglycerate-independent phosphoglycerate mutase (494 aa).

Residues D12 and S62 each coordinate Mn(2+). S62 functions as the Phosphoserine intermediate in the catalytic mechanism. Substrate is bound by residues H121, 150–151, R181, R187, 252–255, and K317; these read RD and RSDR. Mn(2+) is bound by residues D384, H388, D425, H426, and H443.

Belongs to the BPG-independent phosphoglycerate mutase family. In terms of assembly, monomer. The cofactor is Mn(2+).

The catalysed reaction is (2R)-2-phosphoglycerate = (2R)-3-phosphoglycerate. The protein operates within carbohydrate degradation; glycolysis; pyruvate from D-glyceraldehyde 3-phosphate: step 3/5. Its function is as follows. Catalyzes the interconversion of 2-phosphoglycerate and 3-phosphoglycerate. The sequence is that of 2,3-bisphosphoglycerate-independent phosphoglycerate mutase from Anaplasma marginale (strain St. Maries).